The chain runs to 85 residues: Beta-toxin Ct6 (85 aa).

The N-terminal stretch at 1 to 18 is a signal peptide; that stretch reads MKTFVLALCLVLIGMVYA. One can recognise an LCN-type CS-alpha/beta domain in the interval 19-84; the sequence is KDGYLVSKHT…VYPLPNKSCG (66 aa). 4 disulfide bridges follow: cysteine 30/cysteine 83, cysteine 34/cysteine 59, cysteine 43/cysteine 64, and cysteine 47/cysteine 66. Residue cysteine 83 is modified to Cysteine amide.

It belongs to the long (4 C-C) scorpion toxin superfamily. Sodium channel inhibitor family. Beta subfamily. Expressed by the venom gland.

The protein localises to the secreted. Functionally, beta toxins bind voltage-independently at site-4 of sodium channels (Nav) and shift the voltage of activation toward more negative potentials thereby affecting sodium channel activation and promoting spontaneous and repetitive firing. This is Beta-toxin Ct6 from Centruroides tecomanus (Scorpion).